An 83-amino-acid polypeptide reads, in one-letter code: UPF0248 protein PYRAB10580 (83 aa).

It belongs to the UPF0248 family.

In Pyrococcus abyssi (strain GE5 / Orsay), this protein is UPF0248 protein PYRAB10580.